Reading from the N-terminus, the 151-residue chain is MKVILRNNVATLGDAGEVVAVKNGYANNFLIPQGMAIRATEGTLKALETEKKQQTKKIELQRKHAREHAQTIEQMSLKVYAKAGDSGKLFGTVTSADIADALKAQGIDIDRRKITIEAPIKSLGKYEADAKIFQDITVKVHFEVEAEGSEA.

Belongs to the bacterial ribosomal protein bL9 family.

Its function is as follows. Binds to the 23S rRNA. The polypeptide is Large ribosomal subunit protein bL9 (Pelodictyon phaeoclathratiforme (strain DSM 5477 / BU-1)).